A 395-amino-acid polypeptide reads, in one-letter code: Phosphoglycerate kinase (395 aa).

Substrate is bound by residues 21–23, arginine 36, 59–62, arginine 120, and arginine 153; these read DFN and HLGR. ATP contacts are provided by residues lysine 203, glutamate 325, and 351–354; that span reads GGDS.

Belongs to the phosphoglycerate kinase family. Monomer.

It is found in the cytoplasm. It catalyses the reaction (2R)-3-phosphoglycerate + ATP = (2R)-3-phospho-glyceroyl phosphate + ADP. The protein operates within carbohydrate degradation; glycolysis; pyruvate from D-glyceraldehyde 3-phosphate: step 2/5. This Roseiflexus castenholzii (strain DSM 13941 / HLO8) protein is Phosphoglycerate kinase.